Here is a 98-residue protein sequence, read N- to C-terminus: Large ribosomal subunit protein bL27 (98 aa).

The disordered stretch occupies residues 1–22 (MAHKKGTGSTRNGRDSNAQRLG). The segment covering 7–19 (TGSTRNGRDSNAQ) has biased composition (polar residues).

This sequence belongs to the bacterial ribosomal protein bL27 family.

This chain is Large ribosomal subunit protein bL27, found in Nostoc punctiforme (strain ATCC 29133 / PCC 73102).